The following is a 267-amino-acid chain: Methyl-coenzyme M reductase II subunit gamma (267 aa).

Arg123 serves as a coordination point for coenzyme M.

It belongs to the methyl-coenzyme M reductase gamma subunit family. MCR is a hexamer of two alpha, two beta, and two gamma chains, forming a dimer of heterotrimers. The cofactor is coenzyme F430.

The catalysed reaction is coenzyme B + methyl-coenzyme M = methane + coenzyme M-coenzyme B heterodisulfide. Its pathway is one-carbon metabolism; methyl-coenzyme M reduction; methane from methyl-coenzyme M: step 1/1. Its function is as follows. Component of the methyl-coenzyme M reductase (MCR) I that catalyzes the reductive cleavage of methyl-coenzyme M (CoM-S-CH3 or 2-(methylthio)ethanesulfonate) using coenzyme B (CoB or 7-mercaptoheptanoylthreonine phosphate) as reductant which results in the production of methane and the mixed heterodisulfide of CoB and CoM (CoM-S-S-CoB). This is the final step in methanogenesis. The protein is Methyl-coenzyme M reductase II subunit gamma (mrtG) of Methanothermus fervidus (strain ATCC 43054 / DSM 2088 / JCM 10308 / V24 S).